The sequence spans 286 residues: Nucleotide-binding protein PSPA7_5038 (286 aa).

Gly8–Ser15 is a binding site for ATP. Asp60–Asn63 contributes to the GTP binding site.

Belongs to the RapZ-like family.

Functionally, displays ATPase and GTPase activities. This is Nucleotide-binding protein PSPA7_5038 from Pseudomonas paraeruginosa (strain DSM 24068 / PA7) (Pseudomonas aeruginosa (strain PA7)).